A 142-amino-acid chain; its full sequence is Glutamate-rich protein 2 (142 aa).

2 disordered regions span residues 1–55 (MSKN…HAPL) and 104–142 (EKAQ…CEDG). Positions 9–27 (EQEKNNEHCPEDINDKLSE) are enriched in basic and acidic residues. A compositionally biased stretch (acidic residues) spans 28-43 (STDDDGEDTSDEDKEE). Over residues 44 to 53 (DSNPNKDTHA) the composition is skewed to basic and acidic residues. The segment covering 109–142 (LEEDDDESEEDNSESEGESTEDPSEESSDECEDG) has biased composition (acidic residues).

The polypeptide is Glutamate-rich protein 2 (ERICH2) (Bos taurus (Bovine)).